The primary structure comprises 379 residues: Glutamate 5-kinase (379 aa).

Lysine 19 serves as a coordination point for ATP. 3 residues coordinate substrate: serine 59, aspartate 146, and asparagine 158. ATP-binding positions include 178 to 179 and 220 to 226; these read TD and TGGMATK. The 79-residue stretch at 285-363 folds into the PUA domain; that stretch reads SGDIVIDQGA…KDIISILGYD (79 aa).

This sequence belongs to the glutamate 5-kinase family.

It is found in the cytoplasm. It catalyses the reaction L-glutamate + ATP = L-glutamyl 5-phosphate + ADP. Its pathway is amino-acid biosynthesis; L-proline biosynthesis; L-glutamate 5-semialdehyde from L-glutamate: step 1/2. Its function is as follows. Catalyzes the transfer of a phosphate group to glutamate to form L-glutamate 5-phosphate. The protein is Glutamate 5-kinase of Vibrio vulnificus (strain YJ016).